A 308-amino-acid polypeptide reads, in one-letter code: Uridylate cyclase (308 aa).

Asp62 and Asp106 together coordinate Mn(2+).

The protein belongs to the adenylyl cyclase class-4/guanylyl cyclase family. Pyrimidine cyclase subfamily. In terms of assembly, homodimer. Mn(2+) is required as a cofactor.

Its subcellular location is the cytoplasm. It catalyses the reaction GTP = 3',5'-cyclic GMP + diphosphate. It carries out the reaction UTP = 3',5'-cyclic UMP + diphosphate. In terms of biological role, pycsar (pyrimidine cyclase system for antiphage resistance) provides immunity against bacteriophage. The pyrimidine cyclase (PycC) synthesizes cyclic nucleotides in response to infection; these serve as specific second messenger signals. The signals activate the adjacent effector, leading to bacterial cell death and abortive phage infection. A clade D Pycsar system. The pyrimidine cyclase gene of a two-gene Pycsar system, generates cyclic UMP (cUMP) from UTP as well as cGMP from GTP to a lesser extent, has little to no activity on ATP or CTP. Expression of this and adjacent effector PtPycTM (AC A0A4Q9KQH5) probably confers resistance to bacteriophage. The genes are probably only expressed in response to bacteriophage infection. This is Uridylate cyclase from Propioniciclava tarda.